A 392-amino-acid chain; its full sequence is 23S rRNA (uracil(747)-C(5))-methyltransferase RlmC (392 aa).

[4Fe-4S] cluster contacts are provided by cysteine 4, cysteine 12, cysteine 15, and cysteine 93. Glutamine 218, phenylalanine 247, glutamate 275, and asparagine 321 together coordinate S-adenosyl-L-methionine. The Nucleophile role is filled by cysteine 348.

Belongs to the class I-like SAM-binding methyltransferase superfamily. RNA M5U methyltransferase family. RlmC subfamily.

The catalysed reaction is uridine(747) in 23S rRNA + S-adenosyl-L-methionine = 5-methyluridine(747) in 23S rRNA + S-adenosyl-L-homocysteine + H(+). Functionally, catalyzes the formation of 5-methyl-uridine at position 747 (m5U747) in 23S rRNA. The sequence is that of 23S rRNA (uracil(747)-C(5))-methyltransferase RlmC from Haemophilus influenzae (strain 86-028NP).